Reading from the N-terminus, the 360-residue chain is Phenylalanine--tRNA ligase alpha subunit (360 aa).

Residue glutamate 260 coordinates Mg(2+).

It belongs to the class-II aminoacyl-tRNA synthetase family. Phe-tRNA synthetase alpha subunit type 1 subfamily. Tetramer of two alpha and two beta subunits. Mg(2+) serves as cofactor.

The protein resides in the cytoplasm. It carries out the reaction tRNA(Phe) + L-phenylalanine + ATP = L-phenylalanyl-tRNA(Phe) + AMP + diphosphate + H(+). The sequence is that of Phenylalanine--tRNA ligase alpha subunit from Rhizobium rhizogenes (strain K84 / ATCC BAA-868) (Agrobacterium radiobacter).